The following is a 994-amino-acid chain: MKLQSILSCWAILVAQIWATTDGLTDLVAWDPYSLTVNGNRLFVYSGEFHYPRLPVPEMWLDVFQKMRAHGFNAVSLYFFWDYHSPINGTYDFETGAHNIQRLFDYAQEAGIYIIARAGPYCNAEFNGGGLALYLSDGSGGELRTSDATYHQAWTPWIERIGKIIADNSITNGGPVILNQIENELQETTHSASNTLVEYMEQIEEAFRAAGVDVPFTSNEKGQRSRSWSTDYEDVGGAVNVYGLDSYPGGLSCTNPSTGFSVLRNYYQWFQNTSYTQPEYLPEFEGGWFSAWGADSFYDQCTSELSPQFADVYYKNNIGQRVTLQNLYMLYGGTNWGHLAAPVVYTSYDYSAPLRETRQIRDKLSQTKLVGLFTRVSSGLLGVEMEGNGTSYTSTTSAYTWVLRNPNTTAGFYVVQQDTTSSQTDITFSLNVNTSAGAFTLPNINLQGRQSKVISTDYPLGHSTLLYVSTDIATYGTFGDTDVVVLYARSGQVVSFAFKNTTKLTFEEYGDSVNLTSSSGNRTITSYTYTQGSGTSVVKFSNGAIFYLVETETAFRFWAPPTTTDPYVTAEQQIFVLGPYLVRNVSISGSVVDLVGDNDNATTVEVFAGSPAKAVKWNGKEITVTKTDYGSLVGSIGGADSSSITIPSLTGWKVRDSLPEIQSSYDDSKWTVCNKTTTLSPVDPLSLPVLFASDYGYYTGIKIYRGRFDGTNVTGANLTAQGGLAFGWNVWLNGDLVASLPGDADETSSNAAIDFSNHTLKQTDNLLTVVIDYTGHDETSTGDGVENPRGLLGATLNGGSFTSWKIQGNAGGAAGAYELDPVRAPMNEGGLLAERQGWHLPGYKAKSSDGWTDGSPLDGLNKSGVAFYLTTFTLDLPKKYDVPLGIQFTSPSTVDPVRIQLFINGYQYGKYVPYLGPQTTFPIPPGIINNRDKNTIGLSLWAQTDAGAKLENIELISYGAYESGFDAGNGTGFDLNGAKLGYQPEWTEARAKYT.

The first 19 residues, 1–19 (MKLQSILSCWAILVAQIWA), serve as a signal peptide directing secretion. Tyrosine 78 is a substrate binding site. Asparagine 88 carries an N-linked (GlcNAc...) asparagine glycan. Substrate-binding residues include asparagine 123, alanine 124, glutamate 125, and asparagine 183. The active-site Proton donor is the glutamate 184. Tyrosine 247 is a binding site for substrate. Cysteine 253 and cysteine 301 are disulfide-bonded. Asparagine 272 carries an N-linked (GlcNAc...) asparagine glycan. Glutamate 283 (nucleophile) is an active-site residue. Position 350 (tyrosine 350) interacts with substrate. Residues asparagine 388, asparagine 407, asparagine 433, asparagine 500, asparagine 514, asparagine 521, asparagine 584, asparagine 600, asparagine 674, asparagine 712, asparagine 717, asparagine 757, asparagine 861, and asparagine 969 are each glycosylated (N-linked (GlcNAc...) asparagine).

This sequence belongs to the glycosyl hydrolase 35 family.

The protein localises to the secreted. It carries out the reaction Hydrolysis of terminal non-reducing beta-D-galactose residues in beta-D-galactosides.. In terms of biological role, cleaves beta-linked terminal galactosyl residues from gangliosides, glycoproteins, and glycosaminoglycans. This Aspergillus niger (strain ATCC MYA-4892 / CBS 513.88 / FGSC A1513) protein is Probable beta-galactosidase C (lacC).